Reading from the N-terminus, the 227-residue chain is Ribose-5-phosphate isomerase A (227 aa).

Residues 26–29 (TGST), 82–85 (DGAD), and 95–98 (KGGG) contribute to the substrate site. Glu-104 acts as the Proton acceptor in catalysis. Lys-122 contributes to the substrate binding site.

This sequence belongs to the ribose 5-phosphate isomerase family. As to quaternary structure, homodimer.

The enzyme catalyses aldehydo-D-ribose 5-phosphate = D-ribulose 5-phosphate. The protein operates within carbohydrate degradation; pentose phosphate pathway; D-ribose 5-phosphate from D-ribulose 5-phosphate (non-oxidative stage): step 1/1. Its function is as follows. Catalyzes the reversible conversion of ribose-5-phosphate to ribulose 5-phosphate. The polypeptide is Ribose-5-phosphate isomerase A (Streptococcus pyogenes serotype M5 (strain Manfredo)).